Here is a 984-residue protein sequence, read N- to C-terminus: UPF0592 protein YDL073W (984 aa).

The segment at 675–712 is disordered; the sequence is KNHKIMDGYEGGQENEDNDEDSEDSGSHKNKRKEGNSS. The segment covering 687-698 has biased composition (acidic residues); sequence QENEDNDEDSED.

Belongs to the UPF0592 family.

This Saccharomyces cerevisiae (strain ATCC 204508 / S288c) (Baker's yeast) protein is UPF0592 protein YDL073W.